Here is a 203-residue protein sequence, read N- to C-terminus: Adenylyl-sulfate kinase (203 aa).

An ATP-binding site is contributed by 35 to 42 (GLSGSGKS). Residue serine 109 is the Phosphoserine intermediate of the active site.

This sequence belongs to the APS kinase family.

The enzyme catalyses adenosine 5'-phosphosulfate + ATP = 3'-phosphoadenylyl sulfate + ADP + H(+). It participates in sulfur metabolism; hydrogen sulfide biosynthesis; sulfite from sulfate: step 2/3. Catalyzes the synthesis of activated sulfate. This is Adenylyl-sulfate kinase from Geotalea daltonii (strain DSM 22248 / JCM 15807 / FRC-32) (Geobacter daltonii).